A 513-amino-acid chain; its full sequence is Xyloglucan 6-xylosyltransferase 4 (513 aa).

The Cytoplasmic portion of the chain corresponds to 1–39 (MFQDGSRSSGSGRGLSTTAVSNGGWRTRGFLRGWQIQNT). A helical; Signal-anchor for type II membrane protein transmembrane segment spans residues 40 to 60 (LFNNIKFMILCCFVTILILLG). Topologically, residues 61–513 (TIRVGNLGSS…IRRMHMETKP (453 aa)) are lumenal. Asparagine 76, asparagine 110, asparagine 142, asparagine 174, and asparagine 490 each carry an N-linked (GlcNAc...) asparagine glycan.

Belongs to the glycosyltransferase 34 family.

The protein localises to the golgi apparatus membrane. The enzyme catalyses Transfers an alpha-D-xylosyl residue from UDP-D-xylose to a glucose residue in xyloglucan, forming an alpha-(1-&gt;6)-D-xylosyl-D-glucose linkage.. In terms of biological role, xylosyltransferase specific to UDP-D-xylose that accepts cellohexaose as substrate to produce xyloglucan. The polypeptide is Xyloglucan 6-xylosyltransferase 4 (Arabidopsis thaliana (Mouse-ear cress)).